A 322-amino-acid polypeptide reads, in one-letter code: HPr kinase/phosphorylase (322 aa).

Catalysis depends on residues His-146 and Lys-167. 161–168 (GDSGLGKS) contacts ATP. Ser-168 contributes to the Mg(2+) binding site. Asp-185 (proton acceptor; for phosphorylation activity. Proton donor; for dephosphorylation activity) is an active-site residue. The important for the catalytic mechanism of both phosphorylation and dephosphorylation stretch occupies residues 209 to 218 (LEVRGLGLLD). Glu-210 provides a ligand contact to Mg(2+). Residue Arg-250 is part of the active site. The segment at 271–276 (QVAAGR) is important for the catalytic mechanism of dephosphorylation.

It belongs to the HPrK/P family. In terms of assembly, homohexamer. It depends on Mg(2+) as a cofactor.

It catalyses the reaction [HPr protein]-L-serine + ATP = [HPr protein]-O-phospho-L-serine + ADP + H(+). The enzyme catalyses [HPr protein]-O-phospho-L-serine + phosphate + H(+) = [HPr protein]-L-serine + diphosphate. Functionally, catalyzes the ATP- as well as the pyrophosphate-dependent phosphorylation of a specific serine residue in HPr, a phosphocarrier protein of the phosphoenolpyruvate-dependent sugar phosphotransferase system (PTS). HprK/P also catalyzes the pyrophosphate-producing, inorganic phosphate-dependent dephosphorylation (phosphorolysis) of seryl-phosphorylated HPr (P-Ser-HPr). The chain is HPr kinase/phosphorylase from Burkholderia ambifaria (strain ATCC BAA-244 / DSM 16087 / CCUG 44356 / LMG 19182 / AMMD) (Burkholderia cepacia (strain AMMD)).